A 377-amino-acid polypeptide reads, in one-letter code: EPS I polysaccharide export outer membrane protein EpsA (377 aa).

A signal peptide spans 1 to 23 (MFVSIPSIRKTVMSLCAVPLMAA). Cysteine 24 carries N-palmitoyl cysteine lipidation. Cysteine 24 carries the S-diacylglycerol cysteine lipid modification.

This sequence belongs to the BexD/CtrA/VexA family.

It is found in the cell outer membrane. Probably involved in polymerization and/or export of exopolysaccharide EPS I which functions as a virulence factor. The sequence is that of EPS I polysaccharide export outer membrane protein EpsA (epsA) from Ralstonia solanacearum (Pseudomonas solanacearum).